A 359-amino-acid polypeptide reads, in one-letter code: DNA polymerase IV (359 aa).

In terms of domain architecture, UmuC spans 4 to 184 (IVHVDMDAFY…LKVNRIPGVG (181 aa)). Residues aspartate 8 and aspartate 102 each coordinate Mg(2+). Glutamate 103 is a catalytic residue.

This sequence belongs to the DNA polymerase type-Y family. In terms of assembly, monomer. The cofactor is Mg(2+).

The protein localises to the cytoplasm. It carries out the reaction DNA(n) + a 2'-deoxyribonucleoside 5'-triphosphate = DNA(n+1) + diphosphate. Functionally, poorly processive, error-prone DNA polymerase involved in untargeted mutagenesis. Copies undamaged DNA at stalled replication forks, which arise in vivo from mismatched or misaligned primer ends. These misaligned primers can be extended by PolIV. Exhibits no 3'-5' exonuclease (proofreading) activity. May be involved in translesional synthesis, in conjunction with the beta clamp from PolIII. The sequence is that of DNA polymerase IV from Xanthomonas oryzae pv. oryzae (strain MAFF 311018).